The chain runs to 306 residues: Dihydroorotate dehydrogenase B (NAD(+)), catalytic subunit (306 aa).

Residues Ser24 and 48–49 (KA) each bind FMN. Residues Lys48 and 72 to 76 (NAIGL) contribute to the substrate site. FMN-binding residues include Asn102 and Asn130. Residue Asn130 participates in substrate binding. Residue Cys133 is the Nucleophile of the active site. 2 residues coordinate FMN: Lys168 and Ile194. 195–196 (NT) is a binding site for substrate. Residues Gly220, 246 to 247 (GG), and 268 to 269 (GT) each bind FMN.

Belongs to the dihydroorotate dehydrogenase family. Type 1 subfamily. In terms of assembly, heterotetramer of 2 PyrK and 2 PyrD type B subunits. FMN is required as a cofactor.

The protein localises to the cytoplasm. The enzyme catalyses (S)-dihydroorotate + NAD(+) = orotate + NADH + H(+). It functions in the pathway pyrimidine metabolism; UMP biosynthesis via de novo pathway; orotate from (S)-dihydroorotate (NAD(+) route): step 1/1. In terms of biological role, catalyzes the conversion of dihydroorotate to orotate with NAD(+) as electron acceptor. The protein is Dihydroorotate dehydrogenase B (NAD(+)), catalytic subunit (pyrD) of Malacoplasma penetrans (strain HF-2) (Mycoplasma penetrans).